A 343-amino-acid polypeptide reads, in one-letter code: MSAFTPASEVLLRHSDDFEQSRILFAGDLQDDLPARLDTAASRAHTQQFHHWQVLSRQMGDNARFSLVATADDVADCDTLIYYWPKNKPEAQFQLMNLLSLLPVGTDIFVVGENRSGVRSAEQMLADYAPLNKVDSARRCGLYFGRLEKQPVFDANKFWGEYSVDGLTVKTLPGVFSRDGLDVGSQLLLSTLTPHTKGKVLDVGCGAGVLSVAFARHSPKIRLTLCDVSAPAVEASRATLATNGVEGEVFASNVFSEVKGRFDMIISNPPFHDGMQTSLDAAQTLIRGAVRHLNSGGELRIVANAFLPYPDVLDETFGFHEVIAQTGRFKVYRAIMTRQAKKG.

This sequence belongs to the methyltransferase superfamily. RsmC family. As to quaternary structure, monomer.

Its subcellular location is the cytoplasm. The enzyme catalyses guanosine(1207) in 16S rRNA + S-adenosyl-L-methionine = N(2)-methylguanosine(1207) in 16S rRNA + S-adenosyl-L-homocysteine + H(+). Specifically methylates the guanine in position 1207 of 16S rRNA in the 30S particle. The polypeptide is Ribosomal RNA small subunit methyltransferase C (Escherichia coli O81 (strain ED1a)).